Consider the following 181-residue polypeptide: Probable integrase/recombinase YoeC (181 aa).

Residues 3 to 176 (IVQPIRSLEK…DEDTTRAAYK (174 aa)) form the Tyr recombinase domain. Residues arginine 40, lysine 64, histidine 128, arginine 131, and histidine 154 contribute to the active site. The active-site O-(3'-phospho-DNA)-tyrosine intermediate is the tyrosine 163.

It belongs to the 'phage' integrase family.

The polypeptide is Probable integrase/recombinase YoeC (yoeC) (Bacillus subtilis (strain 168)).